Consider the following 286-residue polypeptide: tRNA (guanine-N(7)-)-methyltransferase (286 aa).

Positions 91, 116, 143, and 165 each coordinate S-adenosyl-L-methionine. The active site involves aspartate 165. Substrate-binding positions include lysine 169, aspartate 201, and 262–265 (TNFE).

This sequence belongs to the class I-like SAM-binding methyltransferase superfamily. TrmB family.

It carries out the reaction guanosine(46) in tRNA + S-adenosyl-L-methionine = N(7)-methylguanosine(46) in tRNA + S-adenosyl-L-homocysteine. It participates in tRNA modification; N(7)-methylguanine-tRNA biosynthesis. Catalyzes the formation of N(7)-methylguanine at position 46 (m7G46) in tRNA. The protein is tRNA (guanine-N(7)-)-methyltransferase of Bifidobacterium longum subsp. infantis (strain ATCC 15697 / DSM 20088 / JCM 1222 / NCTC 11817 / S12).